Here is a 406-residue protein sequence, read N- to C-terminus: MTFPVEKVRADFPILQREVNGLPLAYLDSAASAQKPNQVIDAESAFYRHGYAAVHRGIHTLSAQATESMENVRKQASRFINARSAEELVFVRGTTEGINLVANSWGTENIRAGDNIIISEMEHHANIVPWQMLCERKGAELRVIPLHPDGTLRLETLAALFDDRTRLLAITHVSNVLGTENPLPDMIALARQHGAKVLVDGAQAVMHHAVDVQALDCDFYVFSGHKLYGPTGIGILYVKEALLQEMPPWEGGGSMISTVSLTQGTTWAKAPWRFEAGTPNTGGIIGLGAAIDYVTSLGLDKIGDYEQMLMRYALEQLAQVPDITLYGPAQRLGVIAFNLGKHHAYDVGSFLDNYGIAVRTGHHCAMPLMAWYGVPAMCRASLAMYNTHEEVDRLVAGLTRIHRLLG.

The residue at position 226 (Lys226) is an N6-(pyridoxal phosphate)lysine. Catalysis depends on Cys364, which acts as the Cysteine persulfide intermediate.

The protein belongs to the class-V pyridoxal-phosphate-dependent aminotransferase family. Csd subfamily. Homodimer. Interacts with SufE and the SufBCD complex composed of SufB, SufC and SufD. The interaction with SufE is required to mediate the direct transfer of the sulfur atom from the S-sulfanylcysteine. It depends on pyridoxal 5'-phosphate as a cofactor.

The protein resides in the cytoplasm. It catalyses the reaction (sulfur carrier)-H + L-cysteine = (sulfur carrier)-SH + L-alanine. The enzyme catalyses L-selenocysteine + AH2 = hydrogenselenide + L-alanine + A + H(+). The protein operates within cofactor biosynthesis; iron-sulfur cluster biosynthesis. Functionally, cysteine desulfurases mobilize the sulfur from L-cysteine to yield L-alanine, an essential step in sulfur metabolism for biosynthesis of a variety of sulfur-containing biomolecules. Component of the suf operon, which is activated and required under specific conditions such as oxidative stress and iron limitation. Acts as a potent selenocysteine lyase in vitro, that mobilizes selenium from L-selenocysteine. Selenocysteine lyase activity is however unsure in vivo. This chain is Cysteine desulfurase, found in Salmonella heidelberg (strain SL476).